Reading from the N-terminus, the 344-residue chain is Protein RecA (344 aa).

Position 64–71 (64–71 (GPESSGKT)) interacts with ATP.

It belongs to the RecA family.

The protein localises to the cytoplasm. Can catalyze the hydrolysis of ATP in the presence of single-stranded DNA, the ATP-dependent uptake of single-stranded DNA by duplex DNA, and the ATP-dependent hybridization of homologous single-stranded DNAs. It interacts with LexA causing its activation and leading to its autocatalytic cleavage. The protein is Protein RecA of Paramagnetospirillum magnetotacticum (Aquaspirillum magnetotacticum).